We begin with the raw amino-acid sequence, 458 residues long: Argininosuccinate lyase (458 aa).

Belongs to the lyase 1 family. Argininosuccinate lyase subfamily.

The protein resides in the cytoplasm. It catalyses the reaction 2-(N(omega)-L-arginino)succinate = fumarate + L-arginine. It participates in amino-acid biosynthesis; L-arginine biosynthesis; L-arginine from L-ornithine and carbamoyl phosphate: step 3/3. The sequence is that of Argininosuccinate lyase from Hydrogenobaculum sp. (strain Y04AAS1).